A 429-amino-acid polypeptide reads, in one-letter code: MKSLSLILSALAVQVAVAQTPDKAKEQHPKLETYRCTKASGCKKQTNYIVADAGIHGIRQKNGAGCGDWGQKPNATACPDEASCAKNCILSGMDSNAYKNAGITTSGNKLRLQQLINNQLVSPRVYLLEENKKKYEMLHLTGTEFSFDVEMEKLPCGMNGALYLSEMPQDGGKSTSRNSKAGAYYGAGYCDAQCYVTPFINGVGNIKGQGVCCNELDIWEANSRATHIAPHPCSKPGLYGCTGDECGSSGICDKAGCGWNHNRINVTDFYGRGKQYKVDSTRKFTVTSQFVANKQGDLIELHRHYIQDNKVIESAVVNISGPPKINFINDKYCAATGANEYMRLGGTKQMGDAMSRGMVLAMSVWWSEGDFMAWLDQGVAGPCDATEGDPKNIVKVQPNPEVTFSNIRIGEIGSTSSVKAPAYPGPHRL.

Positions methionine 1 to alanine 18 are cleaved as a signal peptide. Glutamine 19 carries the post-translational modification Pyrrolidone carboxylic acid. Disulfide bonds link cysteine 36/cysteine 42, cysteine 66/cysteine 88, cysteine 78/cysteine 84, cysteine 156/cysteine 383, cysteine 190/cysteine 213, cysteine 194/cysteine 212, cysteine 233/cysteine 252, cysteine 241/cysteine 246, and cysteine 257/cysteine 333. An N-linked (GlcNAc...) asparagine glycan is attached at asparagine 74. The Nucleophile role is filled by glutamate 215. Residue glutamate 220 is the Proton donor of the active site. N-linked (GlcNAc...) asparagine glycosylation is found at asparagine 265 and asparagine 318.

This sequence belongs to the glycosyl hydrolase 7 (cellulase C) family.

The enzyme catalyses Endohydrolysis of (1-&gt;4)-beta-D-glucosidic linkages in cellulose, lichenin and cereal beta-D-glucans.. This chain is Endoglucanase type C, found in Fusarium oxysporum (Fusarium vascular wilt).